Here is a 201-residue protein sequence, read N- to C-terminus: Orotate phosphoribosyltransferase (201 aa).

113-121 (EDIITTGKS) is a 5-phospho-alpha-D-ribose 1-diphosphate binding site. Orotate contacts are provided by Thr117 and Arg145.

Belongs to the purine/pyrimidine phosphoribosyltransferase family. PyrE subfamily. Homodimer. It depends on Mg(2+) as a cofactor.

The enzyme catalyses orotidine 5'-phosphate + diphosphate = orotate + 5-phospho-alpha-D-ribose 1-diphosphate. The protein operates within pyrimidine metabolism; UMP biosynthesis via de novo pathway; UMP from orotate: step 1/2. Catalyzes the transfer of a ribosyl phosphate group from 5-phosphoribose 1-diphosphate to orotate, leading to the formation of orotidine monophosphate (OMP). The polypeptide is Orotate phosphoribosyltransferase (Helicobacter pylori (strain G27)).